A 365-amino-acid chain; its full sequence is tRNA(Met) cytidine acetate ligase (365 aa).

Residues 7-20 (IAEF…HKYL), G96, N152, and R175 contribute to the ATP site.

It belongs to the TmcAL family.

It localises to the cytoplasm. It carries out the reaction cytidine(34) in elongator tRNA(Met) + acetate + ATP = N(4)-acetylcytidine(34) in elongator tRNA(Met) + AMP + diphosphate. Catalyzes the formation of N(4)-acetylcytidine (ac(4)C) at the wobble position of elongator tRNA(Met), using acetate and ATP as substrates. First activates an acetate ion to form acetyladenylate (Ac-AMP) and then transfers the acetyl group to tRNA to form ac(4)C34. This Streptococcus pneumoniae (strain P1031) protein is tRNA(Met) cytidine acetate ligase.